A 212-amino-acid chain; its full sequence is MLPDLSIEHDLQRRGYANLAGIDEAGRGCWAGPVVAAAVVLSPAVYRQPDLLAGVNDSKQLTAGARERIYTSIQTHALGVGVGIVPAFLIDAYGILPATRLAMIQALLALPCAVDALIIDAVQLPGISLPQTALVRGDERSLSIAAASIIAKVTRDRLMATADHCFPHYGFALHKGYGTAVHRRALAQYGPSPLHRRTFQPVIEALLSLEQS.

The region spanning 17–211 (ANLAGIDEAG…VIEALLSLEQ (195 aa)) is the RNase H type-2 domain. The a divalent metal cation site is built by Asp-23, Glu-24, and Asp-120.

This sequence belongs to the RNase HII family. Mn(2+) is required as a cofactor. Requires Mg(2+) as cofactor.

It localises to the cytoplasm. It carries out the reaction Endonucleolytic cleavage to 5'-phosphomonoester.. Endonuclease that specifically degrades the RNA of RNA-DNA hybrids. The protein is Ribonuclease HII of Chloroflexus aurantiacus (strain ATCC 29364 / DSM 637 / Y-400-fl).